Reading from the N-terminus, the 753-residue chain is Rsm22-cox11 tandem protein 1, mitochondrial (753 aa).

Residues 1–39 (MPILTCRYKILFLYNLRNCFTFQNQRCLIPYGTTTTIRW) constitute a mitochondrion transit peptide. [4Fe-4S] cluster contacts are provided by Cys-323, Cys-329, Cys-342, and Cys-430. A helical membrane pass occupies residues 571–591 (IYYLVAISIFALGLTYAAVPL). The Mitochondrial intermembrane segment spans residues 592 to 753 (YRLFCSKTGY…TNGNLLTKLN (162 aa)).

It in the N-terminal section; belongs to the methyltransferase superfamily. Rsm22 family. The protein in the C-terminal section; belongs to the COX11/CtaG family. As to quaternary structure, associates with the mitochondrial ribosome (mitoribosome). Only transiently interacts with the mitoribosome. Specific enzymatic cleavages in vivo by mitochondrial processing peptidase (MPP) yield mature proteins including rsm22-1 and cox11-1.

Its subcellular location is the mitochondrion. It localises to the mitochondrion inner membrane. Mitochondrial ribosome (mitoribosome) assembly factor. Binds at the interface of the head and body domains of the mitochondrial small ribosomal subunit (mt-SSU), occluding the mRNA channel and preventing compaction of the head domain towards the body. Probable inactive methyltransferase: retains the characteristic folding and ability to bind S-adenosyl-L-methionine, but it probably lost its methyltransferase activity. Its function is as follows. Exerts its effect at some terminal stage of cytochrome c oxidase synthesis, probably by being involved in the insertion of the copper B into subunit I. This chain is Rsm22-cox11 tandem protein 1, mitochondrial (cox1101), found in Schizosaccharomyces pombe (strain 972 / ATCC 24843) (Fission yeast).